Reading from the N-terminus, the 578-residue chain is PTS system fructose-specific EIIB'BC component (578 aa).

PTS EIIB type-2 domains follow at residues 1 to 99 and 119 to 214; these read MSKI…EALA and VVAI…AALA. The active-site Phosphocysteine intermediate; for EIIB activity is C125. The residue at position 125 (C125) is a Phosphocysteine; by EIIA. The 336-residue stretch at 241-576 folds into the PTS EIIC type-2 domain; it reads PYMHLLTGVS…KKPIPAEERA (336 aa). The next 9 helical transmembrane spans lie at 251-271, 284-304, 319-339, 364-384, 405-425, 428-450, 477-497, 518-538, and 545-565; these read YMLP…VFGI, LMAI…AGFI, IGGM…VAGF, VLIL…YVVG, NAVV…GGPI, AAYT…AVMA, AGGA…IPFA, LSMA…VLAI, and LGLY…LLIA.

It localises to the cell inner membrane. It catalyses the reaction D-fructose(out) + N(pros)-phospho-L-histidyl-[protein] = D-fructose 1-phosphate(in) + L-histidyl-[protein]. The phosphoenolpyruvate-dependent sugar phosphotransferase system (sugar PTS), a major carbohydrate active transport system, catalyzes the phosphorylation of incoming sugar substrates concomitantly with their translocation across the cell membrane. The enzyme II FruAB PTS system is involved in fructose transport. This chain is PTS system fructose-specific EIIB'BC component, found in Rhodobacter capsulatus (Rhodopseudomonas capsulata).